A 392-amino-acid chain; its full sequence is Tyrosine--tRNA ligase (392 aa).

Positions 41 to 50 match the 'HIGH' region motif; that stretch reads PTAPDLHLGH. Positions 225–229 match the 'KMSKS' region motif; sequence KMSKS. K228 lines the ATP pocket. The 61-residue stretch at 330 to 390 folds into the S4 RNA-binding domain; sequence LRAVDFLVKI…VGKKKFYRVV (61 aa).

Belongs to the class-I aminoacyl-tRNA synthetase family. TyrS type 2 subfamily. Homodimer.

It localises to the cytoplasm. The enzyme catalyses tRNA(Tyr) + L-tyrosine + ATP = L-tyrosyl-tRNA(Tyr) + AMP + diphosphate + H(+). Functionally, catalyzes the attachment of tyrosine to tRNA(Tyr) in a two-step reaction: tyrosine is first activated by ATP to form Tyr-AMP and then transferred to the acceptor end of tRNA(Tyr). This is Tyrosine--tRNA ligase from Aquifex aeolicus (strain VF5).